We begin with the raw amino-acid sequence, 323 residues long: Acetyl-coenzyme A carboxylase carboxyl transferase subunit alpha (323 aa).

The 255-residue stretch at 39 to 293 (RLAGKSQQLT…KRSLAESLRQ (255 aa)) folds into the CoA carboxyltransferase C-terminal domain.

This sequence belongs to the AccA family. As to quaternary structure, acetyl-CoA carboxylase is a heterohexamer composed of biotin carboxyl carrier protein (AccB), biotin carboxylase (AccC) and two subunits each of ACCase subunit alpha (AccA) and ACCase subunit beta (AccD).

The protein resides in the cytoplasm. The enzyme catalyses N(6)-carboxybiotinyl-L-lysyl-[protein] + acetyl-CoA = N(6)-biotinyl-L-lysyl-[protein] + malonyl-CoA. The protein operates within lipid metabolism; malonyl-CoA biosynthesis; malonyl-CoA from acetyl-CoA: step 1/1. Component of the acetyl coenzyme A carboxylase (ACC) complex. First, biotin carboxylase catalyzes the carboxylation of biotin on its carrier protein (BCCP) and then the CO(2) group is transferred by the carboxyltransferase to acetyl-CoA to form malonyl-CoA. The chain is Acetyl-coenzyme A carboxylase carboxyl transferase subunit alpha from Cupriavidus pinatubonensis (strain JMP 134 / LMG 1197) (Cupriavidus necator (strain JMP 134)).